We begin with the raw amino-acid sequence, 257 residues long: MLTFALTIVRHGETQYNRDKLLQGQGIDTPLSDTGHQQAAAAGRYLKDLHFTNVFVSNLQRAIQTAEIILGNNLHSSATEMILDPLLRERGFGVAEGRPKEHLKNMANAAGQSCRDYTPPGGETLEQVKTRFKMFLKSLFQRMLEEHGSALSSAPSEADQPVIAGLADDGAQNVPVHALMVSHGAFIRISVRHLVEDLQCCLPAGLKMNQVFSPCPNTGISRFIFTIHREESVLRATRIQGVFINRKDHLEEVKNSD.

Catalysis depends on histidine 11, which acts as the Tele-phosphohistidine intermediate. Glutamate 89 functions as the Proton donor/acceptor in the catalytic mechanism.

It belongs to the phosphoglycerate mutase family.

The protein resides in the cytoplasm. It localises to the nucleus. Its subcellular location is the mitochondrion. It carries out the reaction beta-D-fructose 2,6-bisphosphate + H2O = beta-D-fructose 6-phosphate + phosphate. Functionally, fructose-bisphosphatase hydrolyzing fructose-2,6-bisphosphate as well as fructose-1,6-bisphosphate. Acts as a negative regulator of glycolysis by lowering intracellular levels of fructose-2,6-bisphosphate in a p53/TP53-dependent manner, resulting in the pentose phosphate pathway (PPP) activation and NADPH production. Contributes to the generation of reduced glutathione to cause a decrease in intracellular reactive oxygen species (ROS) content, correlating with its ability to protect cells from oxidative or metabolic stress-induced cell death. May play a role in mitophagy inhibition. The sequence is that of Fructose-2,6-bisphosphatase TIGAR B from Danio rerio (Zebrafish).